The primary structure comprises 400 residues: CCA-adding enzyme (400 aa).

Residues glycine 28 and arginine 31 each contribute to the ATP site. CTP is bound by residues glycine 28 and arginine 31. The Mg(2+) site is built by aspartate 41 and aspartate 43. The ATP site is built by arginine 112, aspartate 155, arginine 158, arginine 161, and arginine 164. CTP contacts are provided by arginine 112, aspartate 155, arginine 158, arginine 161, and arginine 164.

The protein belongs to the tRNA nucleotidyltransferase/poly(A) polymerase family. Bacterial CCA-adding enzyme type 3 subfamily. In terms of assembly, homodimer. The cofactor is Mg(2+).

It catalyses the reaction a tRNA precursor + 2 CTP + ATP = a tRNA with a 3' CCA end + 3 diphosphate. The enzyme catalyses a tRNA with a 3' CCA end + 2 CTP + ATP = a tRNA with a 3' CCACCA end + 3 diphosphate. Functionally, catalyzes the addition and repair of the essential 3'-terminal CCA sequence in tRNAs without using a nucleic acid template. Adds these three nucleotides in the order of C, C, and A to the tRNA nucleotide-73, using CTP and ATP as substrates and producing inorganic pyrophosphate. tRNA 3'-terminal CCA addition is required both for tRNA processing and repair. Also involved in tRNA surveillance by mediating tandem CCA addition to generate a CCACCA at the 3' terminus of unstable tRNAs. While stable tRNAs receive only 3'-terminal CCA, unstable tRNAs are marked with CCACCA and rapidly degraded. This Staphylococcus epidermidis (strain ATCC 12228 / FDA PCI 1200) protein is CCA-adding enzyme.